The sequence spans 217 residues: Cytidylate kinase (217 aa).

10–18 is an ATP binding site; sequence GPAGAGKST.

Belongs to the cytidylate kinase family. Type 1 subfamily.

It localises to the cytoplasm. It carries out the reaction CMP + ATP = CDP + ADP. The catalysed reaction is dCMP + ATP = dCDP + ADP. This Alkaliphilus oremlandii (strain OhILAs) (Clostridium oremlandii (strain OhILAs)) protein is Cytidylate kinase.